The following is a 153-amino-acid chain: Myosin regulatory light chain LC-2, mantle muscle (153 aa).

Ala-1 bears the Blocked amino end (Ala) mark. 2 consecutive EF-hand domains span residues 13–48 (RQMQ…LGRV) and 82–117 (DPED…MGDN). Residues Asp-26, Asp-28, Asp-30, and Asp-37 each contribute to the Ca(2+) site.

In terms of biological role, in molluscan muscle, calcium regulation is associated with myosin rather than with actin. Muscle myosin contains two types of light chains: the catalytic light chain, essential for ATPase activity, and the regulatory light chain, a calcium-binding protein responsible for Ca(2+) dependent binding and Ca(2+) dependent Mg-ATPase activity. The protein is Myosin regulatory light chain LC-2, mantle muscle of Todarodes pacificus (Japanese flying squid).